Consider the following 296-residue polypeptide: Protoheme IX farnesyltransferase 2 (296 aa).

Helical transmembrane passes span 7 to 27, 36 to 56, 83 to 103, 108 to 128, 134 to 154, 163 to 183, 207 to 227, 229 to 249, and 265 to 285; these read LLVA…GGYF, PMLL…GCVL, LKAA…LLWW, LTTA…SLWF, YGTL…YCAV, ASLL…IAIF, IHIV…CLGG, AGYG…AIAL, and FAFS…DFQV.

It belongs to the UbiA prenyltransferase family. Protoheme IX farnesyltransferase subfamily.

Its subcellular location is the cell inner membrane. The enzyme catalyses heme b + (2E,6E)-farnesyl diphosphate + H2O = Fe(II)-heme o + diphosphate. The protein operates within porphyrin-containing compound metabolism; heme O biosynthesis; heme O from protoheme: step 1/1. Functionally, converts heme B (protoheme IX) to heme O by substitution of the vinyl group on carbon 2 of heme B porphyrin ring with a hydroxyethyl farnesyl side group. The polypeptide is Protoheme IX farnesyltransferase 2 (Pseudomonas aeruginosa (strain UCBPP-PA14)).